Reading from the N-terminus, the 399-residue chain is Chorismate synthase (399 aa).

The segment at 41 to 72 (IQKDLDRRKPGQSMITTSRGEPDKVTINSGIQ) is disordered. NADP(+) is bound at residue arginine 48. FMN-binding positions include 125-127 (RSS), glycine 288, 303-307 (HAPVS), and arginine 330. Composition is skewed to basic and acidic residues over residues 363 to 377 (PDRL…DTDY) and 389 to 399 (ADTHAKTIDDD). Positions 363–399 (PDRLDGRPGEYDTDYHPSSPQNDPEDADTHAKTIDDD) are disordered.

This sequence belongs to the chorismate synthase family. FMNH2 is required as a cofactor.

It carries out the reaction 5-O-(1-carboxyvinyl)-3-phosphoshikimate = chorismate + phosphate. The protein operates within metabolic intermediate biosynthesis; chorismate biosynthesis; chorismate from D-erythrose 4-phosphate and phosphoenolpyruvate: step 7/7. Its function is as follows. Catalyzes the anti-1,4-elimination of the C-3 phosphate and the C-6 proR hydrogen from 5-enolpyruvylshikimate-3-phosphate (EPSP) to yield chorismate, which is the branch point compound that serves as the starting substrate for the three terminal pathways of aromatic amino acid biosynthesis. This reaction introduces a second double bond into the aromatic ring system. The sequence is that of Chorismate synthase from Haloarcula marismortui (strain ATCC 43049 / DSM 3752 / JCM 8966 / VKM B-1809) (Halobacterium marismortui).